A 432-amino-acid chain; its full sequence is MDFLEAEGGWNLSFSGSGYMGLYHVGVTQCLRQRAPRLIQGARRFYGSSSGALNAMAIVFGKSADFACSNLLDLVKLVERLSLGIFHPAYGPAEHIRKKLYENLPDNCHILASQRLGISMTRWPDGKNFIVTDFATRDEFIQALICTLYLPLYCGVIPPAFRGQRFIDGALSNNLPFSDCPTTITVSPFNGTVDICPQNISHSLFELTAFNASFQISTRNFFRGLKSVFPPKPEVVADHCRQGYLDALRFLERRGLTKEPVLWSLVSKEPPALVEGPRGTGHDQGQKTGPTVRWDIPNVLVKDVPNFELLSPELEAALRKACKRDFWTRVQCSVPGKVLAYLLLPCTLPFEYAYFRSRRLMEWLPEAPDDLDWMRSILKSTTLEVYSMAKSWLLRLGSPPGTRADSGLLRQQRGTAPSGNRPLNHRWFPGMD.

In terms of domain architecture, PNPLA spans 12–181 (LSFSGSGYMG…SNNLPFSDCP (170 aa)). Residues 16–21 (GSGYMG) carry the GXGXXG motif. Residues 47-51 (GSSSG) carry the GXSXG motif. Ser-49 acts as the Nucleophile in catalysis. The active-site Proton acceptor is Asp-168. The DGA/G motif lies at 168–170 (DGA). The segment at 404–423 (ADSGLLRQQRGTAPSGNRPL) is disordered.

The enzyme catalyses a triacylglycerol + H2O = a diacylglycerol + a fatty acid + H(+). In terms of biological role, has abundant triacylglycerol lipase activity. The polypeptide is Patatin-like phospholipase domain-containing protein 5 (Mus musculus (Mouse)).